A 581-amino-acid polypeptide reads, in one-letter code: Prolactin receptor (581 aa).

The N-terminal stretch at 1-24 (MKENVASRAVFILLLFLNASLLNG) is a signal peptide. The Extracellular portion of the chain corresponds to 25-234 (QSPPGKPKII…QIPNDFPVND (210 aa)). Fibronectin type-III domains lie at 27–127 (PPGK…IVEP) and 129–229 (PPAN…IPND). Residues Cys-36 and Cys-46 are joined by a disulfide bond. Asn-59 is a glycosylation site (N-linked (GlcNAc...) asparagine). Residues Cys-75 and Cys-86 are joined by a disulfide bond. Asn-132 carries an N-linked (GlcNAc...) asparagine glycan. The Zn(2+) site is built by Asp-211 and His-212. Positions 215 to 219 (WSEWS) match the WSXWS motif motif. N-linked (GlcNAc...) asparagine glycosylation occurs at Asn-233. Residues 235 to 258 (TTVWIFVAVLSAVICLIMVWAVAL) form a helical membrane-spanning segment. At 259-581 (KGYSMMTCIL…PAKEAPPALP (323 aa)) the chain is on the cytoplasmic side. The short motif at 267–275 (ILPPVPGPK) is the Box 1 motif element. 2 disordered regions span residues 321–362 (EDQQ…LFSE) and 462–502 (LKPS…QDKT). Residues 329–349 (PSKEHMEQGVKPMHMDPDSDS) show a composition bias toward basic and acidic residues.

Belongs to the type I cytokine receptor family. Type 1 subfamily. Interacts with SMARCA1. Interacts with NEK3 and VAV2 and this interaction is prolactin-dependent.

It localises to the membrane. Functionally, this is a receptor for the anterior pituitary hormone prolactin. The chain is Prolactin receptor (PRLR) from Cervus elaphus (Red deer).